We begin with the raw amino-acid sequence, 136 residues long: Class I hydrophobin 16 (136 aa).

A signal peptide spans 1–19; that stretch reads MKFTSVIALVATAATLVGA. 4 cysteine pairs are disulfide-bonded: Cys-58-Cys-115, Cys-65-Cys-109, Cys-66-Cys-99, and Cys-116-Cys-129. The N-linked (GlcNAc...) asparagine glycan is linked to Asn-74.

The protein belongs to the fungal hydrophobin family. As to quaternary structure, self-assembles to form functional amyloid fibrils called rodlets. Self-assembly into fibrillar rodlets occurs spontaneously at hydrophobic:hydrophilic interfaces and the rodlets further associate laterally to form amphipathic monolayers.

It is found in the secreted. It localises to the cell wall. Aerial growth, conidiation, and dispersal of filamentous fungi in the environment rely upon a capability of their secreting small amphipathic proteins called hydrophobins (HPBs) with low sequence identity. Class I can self-assemble into an outermost layer of rodlet bundles on aerial cell surfaces, conferring cellular hydrophobicity that supports fungal growth, development and dispersal; whereas Class II form highly ordered films at water-air interfaces through intermolecular interactions but contribute nothing to the rodlet structure. Hydph16 is a class I hydrophobin that has specific functions in aerial mycelium formation, cell wall stress protection, and cell wall structure formation, but does not seem to be involved in mycelial hydrophobicity. Specifically functions in resisting cell wall synthesis inhibitors. The chain is Class I hydrophobin 16 from Pleurotus ostreatus (strain PC15) (Oyster mushroom).